A 624-amino-acid chain; its full sequence is LEAF RUST 10 DISEASE-RESISTANCE LOCUS RECEPTOR-LIKE PROTEIN KINASE-like 2.2 (624 aa).

An N-terminal signal peptide occupies residues 1-30 (MDYLSSMGSQTARFCLILLFLFYYLPCALS). Topologically, residues 31–263 (QDDLWGCGTP…IPNTRSILIT (233 aa)) are extracellular. 6 N-linked (GlcNAc...) asparagine glycosylation sites follow: Asn45, Asn75, Asn85, Asn95, Asn150, and Asn164. A helical membrane pass occupies residues 264 to 284 (IGQVVGFHVFIIVVMIIAFLF). Over 285-624 (WRRKKVNDLR…EEDSSIYSEV (340 aa)) the chain is Cytoplasmic. Residues 317–599 (KSFTEVVGRG…SLDPPPKPLL (283 aa)) form the Protein kinase domain. Residues 323 to 331 (VGRGGFGTV) and Lys345 each bind ATP. Asp434 (proton acceptor) is an active-site residue. The interval 587-624 (NLDSLDPPPKPLLHMPMQNNNAESSQPSEEDSSIYSEV) is disordered. Over residues 603-624 (MQNNNAESSQPSEEDSSIYSEV) the composition is skewed to polar residues.

It belongs to the protein kinase superfamily. Ser/Thr protein kinase family.

The protein resides in the membrane. The enzyme catalyses L-seryl-[protein] + ATP = O-phospho-L-seryl-[protein] + ADP + H(+). It catalyses the reaction L-threonyl-[protein] + ATP = O-phospho-L-threonyl-[protein] + ADP + H(+). The sequence is that of LEAF RUST 10 DISEASE-RESISTANCE LOCUS RECEPTOR-LIKE PROTEIN KINASE-like 2.2 from Arabidopsis thaliana (Mouse-ear cress).